The sequence spans 208 residues: Outer-membrane lipoprotein carrier protein (208 aa).

A signal peptide spans 1 to 22 (MKNLLCAVMLTSPLLYSTAVFA).

Belongs to the LolA family. As to quaternary structure, monomer.

It localises to the periplasm. Functionally, participates in the translocation of lipoproteins from the inner membrane to the outer membrane. Only forms a complex with a lipoprotein if the residue after the N-terminal Cys is not an aspartate (The Asp acts as a targeting signal to indicate that the lipoprotein should stay in the inner membrane). The protein is Outer-membrane lipoprotein carrier protein of Shewanella putrefaciens (strain CN-32 / ATCC BAA-453).